The primary structure comprises 174 residues: Keratin-associated protein 1-5 (174 aa).

The 15 X 5 AA repeats of C-C-[QEPVRC]-[TPIVLE]-[SRHVP] stretch occupies residues 3-172 (CCQTSFCGYP…CCRPVCCCEP (170 aa)).

Belongs to the KRTAP type 1 family. Interacts with hair keratins. As to expression, expressed in the middle/upper portions of the hair cortex, in the region termed the keratogenous zone.

In the hair cortex, hair keratin intermediate filaments are embedded in an interfilamentous matrix, consisting of hair keratin-associated proteins (KRTAP), which are essential for the formation of a rigid and resistant hair shaft through their extensive disulfide bond cross-linking with abundant cysteine residues of hair keratins. The matrix proteins include the high-sulfur and high-glycine-tyrosine keratins. In Homo sapiens (Human), this protein is Keratin-associated protein 1-5 (KRTAP1-5).